The following is a 405-amino-acid chain: Tryptophan synthase beta chain (405 aa).

At Lys-95 the chain carries N6-(pyridoxal phosphate)lysine.

It belongs to the TrpB family. Tetramer of two alpha and two beta chains. Pyridoxal 5'-phosphate is required as a cofactor.

It catalyses the reaction (1S,2R)-1-C-(indol-3-yl)glycerol 3-phosphate + L-serine = D-glyceraldehyde 3-phosphate + L-tryptophan + H2O. It functions in the pathway amino-acid biosynthesis; L-tryptophan biosynthesis; L-tryptophan from chorismate: step 5/5. Its function is as follows. The beta subunit is responsible for the synthesis of L-tryptophan from indole and L-serine. The polypeptide is Tryptophan synthase beta chain (Pseudomonas putida (strain ATCC 700007 / DSM 6899 / JCM 31910 / BCRC 17059 / LMG 24140 / F1)).